Reading from the N-terminus, the 159-residue chain is Ribosomal RNA large subunit methyltransferase H (159 aa).

S-adenosyl-L-methionine contacts are provided by residues Leu-76, Gly-108, and 127 to 132; that span reads FSKMTF.

It belongs to the RNA methyltransferase RlmH family. As to quaternary structure, homodimer.

The protein localises to the cytoplasm. The enzyme catalyses pseudouridine(1915) in 23S rRNA + S-adenosyl-L-methionine = N(3)-methylpseudouridine(1915) in 23S rRNA + S-adenosyl-L-homocysteine + H(+). Functionally, specifically methylates the pseudouridine at position 1915 (m3Psi1915) in 23S rRNA. In Staphylococcus carnosus (strain TM300), this protein is Ribosomal RNA large subunit methyltransferase H.